A 108-amino-acid polypeptide reads, in one-letter code: Large ribosomal subunit protein uL24 (108 aa).

This sequence belongs to the universal ribosomal protein uL24 family. Part of the 50S ribosomal subunit.

Its function is as follows. One of two assembly initiator proteins, it binds directly to the 5'-end of the 23S rRNA, where it nucleates assembly of the 50S subunit. Functionally, one of the proteins that surrounds the polypeptide exit tunnel on the outside of the subunit. In Geobacter metallireducens (strain ATCC 53774 / DSM 7210 / GS-15), this protein is Large ribosomal subunit protein uL24.